The following is a 381-amino-acid chain: MPFGNTHNKFKLNYKPEEEYPDLSKHNNHMAKVLTLELYKKLRDKETPSGFTVDDVIQTGVDNPGHPFIMTVGCVAGDEESYEVFKELFDPIISDRHGGYKPTDKHKTDLNHENLKGGDDLDPNYVLSSRVRTGRSIKGYTLPPHCSRGERRAVEKLSVEALNSLTGEFKGKYYPLKSMTEKEQQQLIDDHFLFDKPVSPLLLASGMARDWPDARGIWHNDNKSFLVWVNEEDHLRVISMEKGGNMKEVFRRFCVGLQKIEEIFKKAGHPFMWNQHLGYVLTCPSNLGTGLRGGVHVKLAHLSKHPKFEEILTRLRLQKRGTGGVDTAAVGSVFDVSNADRLGSSEVEQVQLVVDGVKLMVEMEKKLEKGQSIDDMIPAQK.

In terms of domain architecture, Phosphagen kinase N-terminal spans 11–98; that stretch reads KLNYKPEEEY…FDPIISDRHG (88 aa). The 243-residue stretch at 125–367 folds into the Phosphagen kinase C-terminal domain; it reads YVLSSRVRTG…KLMVEMEKKL (243 aa). Position 128-132 (128-132) interacts with ATP; that stretch reads SSRVR. The residue at position 164 (S164) is a Phosphoserine. A Phosphothreonine modification is found at T166. Position 178 is a phosphoserine (S178). Phosphothreonine is present on T180. ATP is bound at residue H191. At S199 the chain carries Phosphoserine. ATP-binding residues include R236 and R292. Phosphothreonine occurs at positions 313 and 322. Residues 320–325 and D335 contribute to the ATP site; that span reads RGTGGV. S372 bears the Phosphoserine mark.

It belongs to the ATP:guanido phosphotransferase family. As to quaternary structure, dimer of identical or non-identical chains, which can be either B (brain type) or M (muscle type). With MM being the major form in skeletal muscle and myocardium, MB existing in myocardium, and BB existing in many tissues, especially brain.

The protein localises to the cytoplasm. It catalyses the reaction creatine + ATP = N-phosphocreatine + ADP + H(+). Reversibly catalyzes the transfer of phosphate between ATP and various phosphogens (e.g. creatine phosphate). Creatine kinase isoenzymes play a central role in energy transduction in tissues with large, fluctuating energy demands, such as skeletal muscle, heart, brain and spermatozoa. This is Creatine kinase M-type (CKM) from Homo sapiens (Human).